The sequence spans 387 residues: Synaptotagmin-8 (387 aa).

Residues 1–34 (MGHPPVSPSAPAPAGTTAIPGLIPDLVAGTPWPR) are Extracellular-facing. Residues 35-55 (WALIAGALAAGVLLVSCLLCA) form a helical; Signal-anchor for type III membrane protein membrane-spanning segment. Residues 56-387 (ACCCCRRHRK…LRLRLPLPHS (332 aa)) lie on the Cytoplasmic side of the membrane. Residues 70-99 (KESVGLGSARGTTTTHLVQPDVDGLESSPG) form a disordered region. 2 consecutive C2 domains span residues 103–219 (QWGC…EHWY) and 231–346 (QVGE…QHWA).

This sequence belongs to the synaptotagmin family. As to quaternary structure, homodimer or homooligomer. Homodimerization and homooligomerization do not depend on Ca(2+). Interacts with SYNCRIP isoform 2 C-terminus. Binds inositol 1,3,4,5-tetrakisphosphate (IP4). Binds to AP2 in a Ca(2+)-independent manner. Interacts with STX1A, STX1B and STX2; the interaction is Ca(2+)-dependent.

The protein resides in the cell membrane. It localises to the cytoplasmic vesicle. Its subcellular location is the secretory vesicle. It is found in the acrosome. Functionally, involved in the trafficking and exocytosis of secretory vesicles in non-neuronal tissues. Mediates Ca(2+)-regulation of exocytosis acrosomal reaction in sperm. May mediate Ca(2+)-regulation of exocytosis in insulin secreted cells. The protein is Synaptotagmin-8 (SYT8) of Homo sapiens (Human).